The primary structure comprises 133 residues: Small ribosomal subunit protein uS8c (133 aa).

This sequence belongs to the universal ribosomal protein uS8 family. In terms of assembly, part of the 30S ribosomal subunit.

The protein resides in the plastid. Its subcellular location is the chloroplast. In terms of biological role, one of the primary rRNA binding proteins, it binds directly to 16S rRNA central domain where it helps coordinate assembly of the platform of the 30S subunit. This chain is Small ribosomal subunit protein uS8c (rps8), found in Cyanidium caldarium (Red alga).